Reading from the N-terminus, the 289-residue chain is Digeranylgeranylglyceryl phosphate synthase (289 aa).

The next 8 membrane-spanning stretches (helical) occupy residues 17-37, 50-70, 106-126, 141-161, 163-183, 221-241, 243-263, and 269-289; these read CLMA…ILTS, LFSS…GNAI, FALG…IALF, TPLL…LFGA, VFGL…ALAI, LIGF…MLGL, YLYL…QLLA, and KSSK…IAGV.

It belongs to the UbiA prenyltransferase family. DGGGP synthase subfamily. Requires Mg(2+) as cofactor.

It is found in the cell membrane. The catalysed reaction is sn-3-O-(geranylgeranyl)glycerol 1-phosphate + (2E,6E,10E)-geranylgeranyl diphosphate = 2,3-bis-O-(geranylgeranyl)-sn-glycerol 1-phosphate + diphosphate. It functions in the pathway membrane lipid metabolism; glycerophospholipid metabolism. Functionally, prenyltransferase that catalyzes the transfer of the geranylgeranyl moiety of geranylgeranyl diphosphate (GGPP) to the C2 hydroxyl of (S)-3-O-geranylgeranylglyceryl phosphate (GGGP). This reaction is the second ether-bond-formation step in the biosynthesis of archaeal membrane lipids. This chain is Digeranylgeranylglyceryl phosphate synthase, found in Methanosarcina barkeri (strain Fusaro / DSM 804).